Consider the following 162-residue polypeptide: D-aminoacyl-tRNA deacylase (162 aa).

Positions Gly-145–Pro-146 match the Gly-cisPro motif, important for rejection of L-amino acids motif.

Belongs to the DTD family. In terms of assembly, homodimer.

It localises to the cytoplasm. The catalysed reaction is glycyl-tRNA(Ala) + H2O = tRNA(Ala) + glycine + H(+). It carries out the reaction a D-aminoacyl-tRNA + H2O = a tRNA + a D-alpha-amino acid + H(+). Its function is as follows. An aminoacyl-tRNA editing enzyme that deacylates mischarged D-aminoacyl-tRNAs. Also deacylates mischarged glycyl-tRNA(Ala), protecting cells against glycine mischarging by AlaRS. Acts via tRNA-based rather than protein-based catalysis; rejects L-amino acids rather than detecting D-amino acids in the active site. By recycling D-aminoacyl-tRNA to D-amino acids and free tRNA molecules, this enzyme counteracts the toxicity associated with the formation of D-aminoacyl-tRNA entities in vivo and helps enforce protein L-homochirality. The protein is D-aminoacyl-tRNA deacylase of Bifidobacterium longum subsp. infantis (strain ATCC 15697 / DSM 20088 / JCM 1222 / NCTC 11817 / S12).